A 549-amino-acid chain; its full sequence is Probable protein kinase UbiB (549 aa).

The Protein kinase domain occupies 123 to 504; that stretch reads DFDETALASA…QRNNTGFSRL (382 aa). ATP contacts are provided by residues 129-137 and Lys-156; that span reads LASASIAQV. The active-site Proton acceptor is Asp-291. Residues 505-525 traverse the membrane as a helical segment; sequence MILGIAIAGTFWKFEMLPLWV.

This sequence belongs to the ABC1 family. UbiB subfamily.

Its subcellular location is the cell inner membrane. The protein operates within cofactor biosynthesis; ubiquinone biosynthesis [regulation]. Its function is as follows. Is probably a protein kinase regulator of UbiI activity which is involved in aerobic coenzyme Q (ubiquinone) biosynthesis. This chain is Probable protein kinase UbiB, found in Glaesserella parasuis serovar 5 (strain SH0165) (Haemophilus parasuis).